The primary structure comprises 187 residues: Elongation factor P (187 aa).

The residue at position 34 (K34) is an N6-(3,6-diaminohexanoyl)-5-hydroxylysine.

This sequence belongs to the elongation factor P family. Post-translationally, may be beta-lysylated on the epsilon-amino group of Lys-34 by the combined action of EpmA and EpmB, and then hydroxylated on the C5 position of the same residue by EpmC (if this protein is present). Lysylation is critical for the stimulatory effect of EF-P on peptide-bond formation. The lysylation moiety may extend toward the peptidyltransferase center and stabilize the terminal 3-CCA end of the tRNA. Hydroxylation of the C5 position on Lys-34 may allow additional potential stabilizing hydrogen-bond interactions with the P-tRNA.

Its subcellular location is the cytoplasm. It functions in the pathway protein biosynthesis; polypeptide chain elongation. Functionally, involved in peptide bond synthesis. Alleviates ribosome stalling that occurs when 3 or more consecutive Pro residues or the sequence PPG is present in a protein, possibly by augmenting the peptidyl transferase activity of the ribosome. Modification of Lys-34 is required for alleviation. This is Elongation factor P from Vesicomyosocius okutanii subsp. Calyptogena okutanii (strain HA).